The primary structure comprises 161 residues: Anaerobic nitrite reductase Glb1-2 (161 aa).

The Globin domain maps to 9-158 (AFTEEQEALV…LASAIIAEMK (150 aa)). Positions 42–46 (EIAPP) match the Homodimerization motif. Serine 52, lysine 66, histidine 70, lysine 100, threonine 104, and histidine 105 together coordinate heme b. The short motif at 112–124 (PEHFEVTKQALLD) is the Homodimerization element.

It belongs to the plant globin family. In terms of assembly, homodimer. Requires heme b as cofactor. In terms of tissue distribution, mainly expressed in root nodules and leaves, and, to a lower extent, in roots, stems, flowers and fruits. Accumulates in mature root nodules.

The catalysed reaction is Fe(III)-heme b-[protein] + nitric oxide + H2O = Fe(II)-heme b-[protein] + nitrite + 2 H(+). Phytoglobin that reduces nitrite to nitric oxide (NO) under anoxic conditions (e.g. during flooding or in waterlogged soil) and upon root nodulation. Required for general plant development and during nodulation, especially for the onset of symbiosis. Monitors nitric oxide (NO) levels during early phase of the nitrogen-fixing symbiosis and buffers oxygen in functioning nodules. Necessary for the production of pods. May not function as an oxygen storage or transport protein. Has an unusually high affinity for O(2) through a hexacoordinate heme iron because of a very low dissociation constant. This chain is Anaerobic nitrite reductase Glb1-2, found in Lotus japonicus (Lotus corniculatus var. japonicus).